We begin with the raw amino-acid sequence, 569 residues long: GATOR1 complex protein NPRL3 (569 aa).

Disordered stretches follow at residues 27–60 (PFQR…DQDG) and 441–476 (TPNA…SGDS). 2 stretches are compositionally biased toward polar residues: residues 34–52 (HPAS…NNTG) and 441–468 (TPNA…NSSA). Ser-476 is subject to Phosphoserine.

Belongs to the NPR3 family. Within the GATOR complex, component of the GATOR1 subcomplex, made of DEPDC5, NPRL2 and NPRL3. GATOR1 mediates the strong interaction of the GATOR complex with small GTPases Rag (RagA/RRAGA, RagB/RRAGB, RagC/RRAGC and/or RagD/RRAGD) heterodimers. GATOR1 interacts with GPR155/LYCHOS; interaction takes place in presence of cholesterol and prevents interaction between GATOR1 and KICSTOR.

It is found in the lysosome membrane. Functionally, as a component of the GATOR1 complex functions as an inhibitor of the amino acid-sensing branch of the mTORC1 pathway. In response to amino acid depletion, the GATOR1 complex has GTPase activating protein (GAP) activity and strongly increases GTP hydrolysis by RagA/RRAGA (or RagB/RRAGB) within heterodimeric Rag complexes, thereby turning them into their inactive GDP-bound form, releasing mTORC1 from lysosomal surface and inhibiting mTORC1 signaling. In the presence of abundant amino acids, the GATOR1 complex is negatively regulated by GATOR2, the other GATOR subcomplex, in this amino acid-sensing branch of the TORC1 pathway. The protein is GATOR1 complex protein NPRL3 of Mus musculus (Mouse).